The following is a 323-amino-acid chain: ADP-L-glycero-D-manno-heptose-6-epimerase (323 aa).

NADP(+) contacts are provided by residues 10–11, 31–32, Lys38, Lys53, 75–79, and Asn92; these read FI, DN, and EGACS. The active-site Proton acceptor is Tyr139. Lys143 serves as a coordination point for NADP(+). Asn168 is a binding site for substrate. NADP(+)-binding residues include Val169 and Lys177. Lys177 serves as the catalytic Proton acceptor. Substrate contacts are provided by residues Asp179, Lys186, 200 to 203, Arg213, and Tyr277; that span reads FGAY.

This sequence belongs to the NAD(P)-dependent epimerase/dehydratase family. HldD subfamily. In terms of assembly, homopentamer. NADP(+) is required as a cofactor.

It carries out the reaction ADP-D-glycero-beta-D-manno-heptose = ADP-L-glycero-beta-D-manno-heptose. It participates in nucleotide-sugar biosynthesis; ADP-L-glycero-beta-D-manno-heptose biosynthesis; ADP-L-glycero-beta-D-manno-heptose from D-glycero-beta-D-manno-heptose 7-phosphate: step 4/4. Functionally, catalyzes the interconversion between ADP-D-glycero-beta-D-manno-heptose and ADP-L-glycero-beta-D-manno-heptose via an epimerization at carbon 6 of the heptose. The sequence is that of ADP-L-glycero-D-manno-heptose-6-epimerase from Hydrogenovibrio crunogenus (strain DSM 25203 / XCL-2) (Thiomicrospira crunogena).